Reading from the N-terminus, the 142-residue chain is MAKKVTGYLKLQVPAGAANPSPPIGPALGQRGLNIMEFCKAFNAQTQKEEKNTPIPVVITIYADRSFTFEMKTPPMSYFLKQAAKIQSGSKLPGRDFAGKVTSAQVREIAEKKMKDLNCDTVESAMRMVEGSARSMGLRVEG.

As to quaternary structure, part of the ribosomal stalk of the 50S ribosomal subunit. Interacts with L10 and the large rRNA to form the base of the stalk. L10 forms an elongated spine to which L12 dimers bind in a sequential fashion forming a multimeric L10(L12)X complex. Post-translationally, lys-40 is trimethylated or acetylated; other modifications may also exist.

Its function is as follows. Forms part of the ribosomal stalk which helps the ribosome interact with GTP-bound translation factors. The sequence is that of Large ribosomal subunit protein uL11 from Rhodopseudomonas palustris (strain ATCC BAA-98 / CGA009).